We begin with the raw amino-acid sequence, 104 residues long: MGTLDPSVCGGLPPEVCEQLMMDQQELIKIKLEKRKWGREVTIIEGLNLDNERLKKVAKQLKSKLATGGTVKNGRIELQGDHRDRVKKLLEEMGYPPENIVIVG.

The protein belongs to the SUI1 family.

The sequence is that of Protein translation factor SUI1 homolog from Ignicoccus hospitalis (strain KIN4/I / DSM 18386 / JCM 14125).